Here is a 192-residue protein sequence, read N- to C-terminus: Putative integrase/recombinase y4gC (192 aa).

Residues 1 to 183 (MPSILERDQI…ATEDLRAIAL (183 aa)) enclose the Tyr recombinase domain. Active-site residues include Arg-41, Lys-66, His-135, Arg-138, and His-161. Tyr-170 (O-(3'-phospho-DNA)-tyrosine intermediate) is an active-site residue.

The protein belongs to the 'phage' integrase family.

In Sinorhizobium fredii (strain NBRC 101917 / NGR234), this protein is Putative integrase/recombinase y4gC.